The chain runs to 1118 residues: MCIVKTLHLITHVMKEYNSQFTEGSDFSLIEEQILEFWKENNIFKKSIENRDEKRRFVFYDGPPFANGLPHYGHLLTGFIKDTVARYKTMAGFRVDRRFGWDCHGLPAEMLAEKELGVSGKLAIEEFGIEKFNNYCRNSVMKFSREWKQYIDRQSRWVDFENDYKTMNLSFMESIMWSFYQLWQKGLIYESIKIVPYSWACQTPLSNFETRIDNAYRQKTSKTVTLAFELLDAPKSLIVDNITAYKILVWTTTPWTLPCNLALAISPNIKYCGAIINKEMYIFSRAYLKNFEDHCKKNNIEYLIHSDDICYLSLEYLSYKPVFNYFIDIKNAFKVLVADFVVEDEGTGIVHMAPGFGEDDFILCKKQGIPDIDDKDTSKLLATICPIDDGGKFTERISDFVNMHVFDTNDQIISILKAKNLCFKTDQYLHNYPHCWRTDTPLIYRAMSSWYVEVTKIKNRMIDLNKDVNWIPSHIRSGQFGKWLENAKDWAISRNRFWGTPLPVWKSDNPNYPRIDVYGSIKKVFDDIKALEEDFDIPIDDLHRPYIDNLVRPNPDDPTGKSMMRRVTDVFDCWFESGSMPYAQLHYPFENKELFENYFPADFITEYVAQTRGWFYTLFVLSTALFDKPPFKNCICHGVVLDTQGQKLSKRLNNYADPMEIFKQYGSDAMRFLMLSHTVSYGGDLLLDKDGVMVRDVIRNVIKPMWNSYNFFTIYADIDKVSARVISDLDEVDNIMDKYIMCECISTIQSIFNAMEEFDQSVGNYGYNIKAACNSIVQFFEVLNNWYIRRCRSRFWSSEITKDKVNAYNTLYTVMYYMVKVSAPFLPAITEAIWQKLNFQEEESVHLSLLPNIEHITLKDEDQKNIQYMKLIINICGCVLSIRNVRNIRVRQPLNKITIYSYNNNNDLFNLPVKYQNILLDEINVKSIVFKSNIEDIASFQLKLNFPELGKRIPEKMKNLISLLKSNQWKVLENGQLMLGIREGEYYILEDNEYTLNLKVHSEFASTITLGPNLLGVLVLDNTLTDELIMEGIARDIVRIIQQSRKDNKFNVSDKIDVVICTQDKMVKNSVQAWYEYIVQQTLSLSLVIHENLDANNVAEYCKTTMKDRNLTLFIKKL.

The 'HIGH' region signature appears at P64 to H74. Residues K647–R651 carry the 'KMSKS' region motif. K650 serves as a coordination point for ATP.

It belongs to the class-I aminoacyl-tRNA synthetase family. IleS type 2 subfamily. In terms of assembly, monomer. Zn(2+) serves as cofactor.

Its subcellular location is the cytoplasm. The enzyme catalyses tRNA(Ile) + L-isoleucine + ATP = L-isoleucyl-tRNA(Ile) + AMP + diphosphate. Catalyzes the attachment of isoleucine to tRNA(Ile). As IleRS can inadvertently accommodate and process structurally similar amino acids such as valine, to avoid such errors it has two additional distinct tRNA(Ile)-dependent editing activities. One activity is designated as 'pretransfer' editing and involves the hydrolysis of activated Val-AMP. The other activity is designated 'posttransfer' editing and involves deacylation of mischarged Val-tRNA(Ile). The polypeptide is Isoleucine--tRNA ligase (Ehrlichia ruminantium (strain Gardel)).